The following is a 245-amino-acid chain: DNA repair protein RecO (245 aa).

Belongs to the RecO family.

Functionally, involved in DNA repair and RecF pathway recombination. This chain is DNA repair protein RecO, found in Anaplasma phagocytophilum (strain HZ).